The chain runs to 335 residues: NmrA-like family domain-containing oxidoreductase hkm9 (335 aa).

NADP(+)-binding positions include 12–17, 38–42, 59–60, 80–82, K137, and 161–164; these read GATGNQ, RNPNS, DG, INS, and YLEN.

Belongs to the NmrA-type oxidoreductase family.

Its pathway is secondary metabolite biosynthesis. Its function is as follows. NmrA-like family domain-containing oxidoreductase; part of the gene cluster that mediates the biosynthesis of hancockiamides, an unusual new family of N-cinnamoylated piperazines. The NRPS hkm10 and the NmrA-like reductase hkm9 are proposed to convert two molecules of L-Phe to the intermediary piperazine called xenocockiamide A. Xenocockiamide A is then converted to hancockiamide D via a series of hydroxylations and O-methylations. The tyrosinase hkm6 may catalyze an aromatic hydroxylation, then the 2-oxoglutarate-dependent Fe(II) dioxygenase hkm4 and the FAD-dependent phenol hydroxylase hkm7 may catalyze consecutive hydroxylations to install 2 more hydroxy groups, and the methyltransferase hkm8 probably catalyzes two methylations using 2 molecules of S-adenosyl-L-methionine (SAM). The NRPS hkm11 activates and transfers trans-cinnamate supplied by the PAL hkm12 to hancockiamide D and produces hancockiamide A. NRPS Hkm11 has the flexibility to tolerate the bulky hancockiamide G as a substrate and the absence of the acetyl-transferase hkm3 opens up the opportunity for hkm11 to introduce a second N-cinnamoyl moiety. The cytochrome P450 monooxygenase hkm5 catalyzes the methylenedioxy bridge formation, converting hancockiamide A into hancockiamide G. Hkm5 can also convert hancockiamide B into hancockiamide C, and hancockiamide D into hancockiamide H. The N-acetyltransferase hkm3 finally transfers an acetyl group to 1-N of piperazine, converting hancockiamide A into hancockiamide B and hancockiamide G into hancockiamide C. The protein is NmrA-like family domain-containing oxidoreductase hkm9 of Aspergillus hancockii.